Consider the following 386-residue polypeptide: MATTKSFLILFFMILATTSSTCAKLEEMVTVLSIDGGGIKGIIPAIILEFLEGQLQEVDNNKDARLADYFDVIGGTSTGGLLTAMITTPNENNRPFAAAKDIVPFYFEHGPHIFNYSGSIIGPMYDGKYLLQVLQEKLGETRVHQALTEVAISSFDIKTNKPVIFTKSNLAKSPELDAKMYDICYSTAAAPIYFPPHYFITHTSNGDIYEFNLVDGGVATVGDPALLSLSVATRLAQEDPAFSSIKSLDYKQMLLLSLGTGTNSEFDKTYTAQEAAKWGPLRWMLAIQQMTNAASSYMTDYYISTVFQARHSQNNYLRVQENALTGTTTEMDDASEANMELLVQVGETLLKKPVSKDSPETYEEALKRFAKLLSNRKKLRANKASY.

The signal sequence occupies residues Met-1 to Ala-23. Positions Leu-32–Leu-229 constitute a PNPLA domain. The short motif at Gly-36 to Gly-41 is the GXGXXG element. The GXSXG motif lies at Gly-75–Gly-79. Ser-77 acts as the Nucleophile in catalysis. Asn-115 carries N-linked (GlcNAc...) asparagine glycosylation. Catalysis depends on Asp-215, which acts as the Proton acceptor. The DGA/G motif lies at Asp-215 to Gly-217. Positions Glu-321–Ala-384 form a coiled coil.

It belongs to the patatin family. Tuber.

Its subcellular location is the vacuole. Probable lipolytic acyl hydrolase (LAH), an activity which is thought to be involved in the response of tubers to pathogens. This Solanum tuberosum (Potato) protein is Patatin-10.